We begin with the raw amino-acid sequence, 478 residues long: Ubiquitin carboxyl-terminal hydrolase calypso (478 aa).

The UCH catalytic domain maps to 11-239 (GWLELESDPG…IRFNLMAVVP (229 aa)). C97 functions as the Nucleophile in the catalytic mechanism. Catalysis depends on H176, which acts as the Proton donor. The ULD domain occupies 400–428 (NYDEFICTFLSMLAHQGELGDLVSQHLIT). Residues 430–478 (RKPNMGSVQNSGSRGVVRNYNKKTTTNGSSPKTPSSKRRRGRTKYRKRK) form a positively charged C-terminal tail required for binding nucleosomes region. Polar residues predominate over residues 432–442 (PNMGSVQNSGS). The disordered stretch occupies residues 432–478 (PNMGSVQNSGSRGVVRNYNKKTTTNGSSPKTPSSKRRRGRTKYRKRK). The span at 464 to 478 (SSKRRRGRTKYRKRK) shows a compositional bias: basic residues.

Belongs to the peptidase C12 family. BAP1 subfamily. Catalytic component of the polycomb repressive deubiquitinase (PR-DUB) complex, at least composed of caly/calypso, Asx and sba (MBD5/6 homolog). The PR-DUB complex associates with nucleosomes to mediate deubiquitination of histone H2AK118ub1 substrates; the association requires the positively charged C-terminal tail of caly, probably due to direct binding of DNA. Interacts (via ULD domain) with Asx (via DEUBAD domain); the interaction produces a stable heterodimer with a composite binding site for ubiquitin. Homodimerizes (via coiled-coil hinge-region between the UCH and ULD domains) to mediate assembly of 2 copies of the caly-Asx heterodimer into a bisymmetric tetramer; dimerization enhances PR-DUB association with nucleosomes.

Its subcellular location is the nucleus. The enzyme catalyses Thiol-dependent hydrolysis of ester, thioester, amide, peptide and isopeptide bonds formed by the C-terminal Gly of ubiquitin (a 76-residue protein attached to proteins as an intracellular targeting signal).. In terms of biological role, catalytic component of the polycomb repressive deubiquitinase (PR-DUB) complex, a complex that specifically mediates deubiquitination of histone H2A monoubiquitinated at 'Lys-119' (H2AK118ub1). Mediates bisymmetric organization of the PR-DUB complex and is involved in association with nucleosomes to mediate deubiquitination. Does not deubiquitinate monoubiquitinated histone H2B. Required to maintain the transcriptionally repressive state of homeotic genes throughout development. The PR-DUB complex has weak or no activity toward 'Lys-48'- and 'Lys-63'-linked polyubiquitin chains. Polycomb group (PcG) protein. The sequence is that of Ubiquitin carboxyl-terminal hydrolase calypso from Aedes aegypti (Yellowfever mosquito).